We begin with the raw amino-acid sequence, 144 residues long: Large ribosomal subunit protein uL15 (144 aa).

Residues 1–52 (MRLNTLSPAEGAKHAPKRVGRGIGSGLGKTAGRGHKGQNSRSGGGVRRGFEG) form a disordered region. Residues 21 to 31 (RGIGSGLGKTA) show a composition bias toward gly residues.

The protein belongs to the universal ribosomal protein uL15 family. As to quaternary structure, part of the 50S ribosomal subunit.

In terms of biological role, binds to the 23S rRNA. The sequence is that of Large ribosomal subunit protein uL15 from Yersinia enterocolitica serotype O:8 / biotype 1B (strain NCTC 13174 / 8081).